A 250-amino-acid polypeptide reads, in one-letter code: Triosephosphate isomerase, cytosolic (250 aa).

The substrate site is built by Asn-1 and Lys-3. His-87 functions as the Electrophile in the catalytic mechanism. The active-site Proton acceptor is the Glu-160.

This sequence belongs to the triosephosphate isomerase family. Homodimer.

Its subcellular location is the cytoplasm. The enzyme catalyses D-glyceraldehyde 3-phosphate = dihydroxyacetone phosphate. The protein operates within carbohydrate biosynthesis; gluconeogenesis. Its pathway is carbohydrate degradation; glycolysis; D-glyceraldehyde 3-phosphate from glycerone phosphate: step 1/1. The protein is Triosephosphate isomerase, cytosolic (TPI1) of Gracilaria gracilis (Red alga).